Here is a 100-residue protein sequence, read N- to C-terminus: Urease subunit gamma (100 aa).

It belongs to the urease gamma subunit family. As to quaternary structure, heterotrimer of UreA (gamma), UreB (beta) and UreC (alpha) subunits. Three heterotrimers associate to form the active enzyme.

It localises to the cytoplasm. It carries out the reaction urea + 2 H2O + H(+) = hydrogencarbonate + 2 NH4(+). Its pathway is nitrogen metabolism; urea degradation; CO(2) and NH(3) from urea (urease route): step 1/1. The sequence is that of Urease subunit gamma from Granulibacter bethesdensis (strain ATCC BAA-1260 / CGDNIH1).